The primary structure comprises 727 residues: 1,4-alpha-glucan branching enzyme GlgB (727 aa).

The Nucleophile role is filled by Asp-405. Residue Glu-458 is the Proton donor of the active site.

It belongs to the glycosyl hydrolase 13 family. GlgB subfamily. Monomer.

It catalyses the reaction Transfers a segment of a (1-&gt;4)-alpha-D-glucan chain to a primary hydroxy group in a similar glucan chain.. Its pathway is glycan biosynthesis; glycogen biosynthesis. Its function is as follows. Catalyzes the formation of the alpha-1,6-glucosidic linkages in glycogen by scission of a 1,4-alpha-linked oligosaccharide from growing alpha-1,4-glucan chains and the subsequent attachment of the oligosaccharide to the alpha-1,6 position. In Yersinia pseudotuberculosis serotype I (strain IP32953), this protein is 1,4-alpha-glucan branching enzyme GlgB.